The sequence spans 337 residues: Succinylglutamate desuccinylase (337 aa).

Zn(2+)-binding residues include histidine 59, glutamate 62, and histidine 152. Glutamate 216 is an active-site residue.

Belongs to the AspA/AstE family. Succinylglutamate desuccinylase subfamily. Zn(2+) is required as a cofactor.

The catalysed reaction is N-succinyl-L-glutamate + H2O = L-glutamate + succinate. It participates in amino-acid degradation; L-arginine degradation via AST pathway; L-glutamate and succinate from L-arginine: step 5/5. In terms of biological role, transforms N(2)-succinylglutamate into succinate and glutamate. This Ectopseudomonas mendocina (strain ymp) (Pseudomonas mendocina) protein is Succinylglutamate desuccinylase.